We begin with the raw amino-acid sequence, 4841 residues long: Nonribosomal peptide synthetase 2 (4841 aa).

Residues 26–429 (VKPPNQNVAL…GRLSDGQVKL (404 aa)) are adenylation 1. Residues 531–604 (EPVDEFESSL…DIIFAARRQI (74 aa)) form the Carrier 1 domain. O-(pantetheine 4'-phosphoryl)serine is present on Ser565. Residues 640–1042 (EEIIPCTPLQ…ILERPTQEIK (403 aa)) form a condensation 1 region. The tract at residues 1072–1463 (FEDVVRKHPE…GRIDDQVKLR (392 aa)) is adenylation 2. A Carrier 2 domain is found at 1587-1665 (EGDWSRMDLV…QLAKHLEGKP (79 aa)). Ser1625 carries the O-(pantetheine 4'-phosphoryl)serine modification. The segment at 1702–2043 (ILPCTPLQEA…QTVWELEADS (342 aa)) is condensation 2. Positions 2139–2212 (SEVELDVRQV…KIAAKLLENR (74 aa)) constitute a Carrier 3 domain. O-(pantetheine 4'-phosphoryl)serine is present on Ser2173. A condensation 3 region spans residues 2248-2663 (AVLPCTPLQS…NHLATEDEAF (416 aa)). Residues 2695–3090 (AAVHPNKLAL…GRADDQVKLR (396 aa)) form an adenylation 3 region. One can recognise a Carrier 4 domain in the interval 3219 to 3293 (QDILVLLYDA…DLANCLAKAA (75 aa)). Residue Ser3253 is modified to O-(pantetheine 4'-phosphoryl)serine. Residues 3333–3735 (IAPCSPLQEG…DLAAESPQSE (403 aa)) are condensation 4. Residues 3759–3838 (QNSFEWTSEA…KMITELASIT (80 aa)) enclose the Carrier 5 domain. Ser3799 is subject to O-(pantetheine 4'-phosphoryl)serine. Positions 3873-4242 (SVLPPTHLQE…VEAEAVSDSL (370 aa)) are condensation 5. Residues 4318 to 4394 (IEWNQNEIGI…EMAQKADTKL (77 aa)) enclose the Carrier 6 domain. The residue at position 4355 (Ser4355) is an O-(pantetheine 4'-phosphoryl)serine. The segment at 4430–4726 (EVLPALPMQV…DIHLITSESR (297 aa)) is condensation 6.

The protein belongs to the NRP synthetase family.

The protein operates within siderophore biosynthesis. Nonribosomal peptide synthetase; part of the gene cluster that mediates the biosynthesis of hydroxamate-containing siderophores that play a critical role in virulence. Gibberella zeae produces extracellular coprogen-type siderophores as well as the intracellular siderophore ferricrocin. The role of extracellular siderophores is to supply iron to the fungus during plant infection, and the intracellular ferricrocin is required for intracellular iron distribution and storage with a crucial role in ascus and ascospore development. SID1 catalyzes the conversion of L-ornithine to N(5)-hydroxyornithine, the first step in the biosynthesis of all hydroxamate-containing siderophores. The assembly of extracellular coprogen-type siderophores is performed by the nonribosomal peptide synthetase (NRPS) NPS6 whereas the intracellular siderophore ferricrocin is assembled by NPS2. This Gibberella zeae (strain ATCC MYA-4620 / CBS 123657 / FGSC 9075 / NRRL 31084 / PH-1) (Wheat head blight fungus) protein is Nonribosomal peptide synthetase 2.